The primary structure comprises 600 residues: Malto-oligosyltrehalose trehalohydrolase (600 aa).

The disordered stretch occupies residues 1–34 (MTQTQPVTPTPPASFQTQHDPRTRLGATPLPGGA). Position 273-278 (273-278 (RLDATP)) interacts with substrate. Aspartate 275 serves as the catalytic Nucleophile. Glutamate 308 functions as the Proton donor in the catalytic mechanism. Substrate contacts are provided by residues 328-332 (DDFHH), glutamate 376, and 399-404 (HDQIGN).

The protein belongs to the glycosyl hydrolase 13 family. As to quaternary structure, monomer.

The protein resides in the cytoplasm. The enzyme catalyses hydrolysis of (1-&gt;4)-alpha-D-glucosidic linkage in 4-alpha-D-[(1-&gt;4)-alpha-D-glucanosyl]n trehalose to yield trehalose and (1-&gt;4)-alpha-D-glucan.. It functions in the pathway glycan biosynthesis; trehalose biosynthesis. This Deinococcus radiodurans (strain ATCC 13939 / DSM 20539 / JCM 16871 / CCUG 27074 / LMG 4051 / NBRC 15346 / NCIMB 9279 / VKM B-1422 / R1) protein is Malto-oligosyltrehalose trehalohydrolase (treZ).